The following is a 221-amino-acid chain: Hydrogenase expression/formation protein HupD (221 aa).

Ni(2+) contacts are provided by Glu20, Asp66, and His97.

The protein belongs to the peptidase A31 family.

Not known. Could be involved in the processing of hydrogenase. This Thiocapsa roseopersicina protein is Hydrogenase expression/formation protein HupD (hupD).